The chain runs to 265 residues: UPF0294 protein KPK_4510 (265 aa).

Belongs to the UPF0294 family.

The protein localises to the cytoplasm. This chain is UPF0294 protein KPK_4510, found in Klebsiella pneumoniae (strain 342).